Consider the following 268-residue polypeptide: MEIQFQQPNMQNQKAGISVTNKGGKFKGRNRNSNNTNKFVGVRQRPSGRWVAEIKDTTQKIRMWLGTFETAEEAARAYDEAACLLRGSNTRTNFITHVSLDSPLASRIRNLLNNRKGDKKQEDGAVASAPSNSKTTISNTSTITSNDDNKESTLSTCATRNTELFEDAYKPDLSNCKEVFESGSQSNISCGFGPFFDHFSFTQLLDMAKNDDITDASSLELSEFERMKVERQISASLYAINGVHEYMETVQESNEALWDLPPLCSLFC.

A compositionally biased stretch (polar residues) spans 1–21 (MEIQFQQPNMQNQKAGISVTN). The interval 1 to 36 (MEIQFQQPNMQNQKAGISVTNKGGKFKGRNRNSNNT) is disordered. The AP2/ERF DNA-binding region spans 38–95 (KFVGVRQRPSGRWVAEIKDTTQKIRMWLGTFETAEEAARAYDEAACLLRGSNTRTNFI). Positions 114–154 (NRKGDKKQEDGAVASAPSNSKTTISNTSTITSNDDNKESTL) are disordered. Residues 131 to 146 (SNSKTTISNTSTITSN) are compositionally biased toward low complexity.

The protein belongs to the AP2/ERF transcription factor family. ERF subfamily. Expressed in roots, root hairs and leaves. Expressed in root epidermis and root hairs.

It is found in the nucleus. Its function is as follows. Transcription factor involved in symbiotic nodule signaling in response to rhizobial Nod factors (NFs). Binds to the GCC-box (NF-responsive box) of ENOD11 promoter. Acts as a transcriptional activator of NF-responsive box-containing target gene promoters in root hairs. Functions as a transcriptional regulator required for root infection by symbiotic rhizobia, infection thread (IT) formation and maintenance, and nodule development. Necessary for NF-induced gene expression and spontaneous nodulation activated by CCAMK. Functions downstream of CCAMK to activate nodulation gene expression. Involved in early stages of root nodule development. Functions redundantly with ERN2. Is essential with ERN2 for the initiation of root hair infection, and nodule organogenesis and development. Required for accurate expression of the NF signaling genes ENOD11 and ENOD12. In Medicago truncatula (Barrel medic), this protein is Ethylene-responsive transcription factor ERN1.